Reading from the N-terminus, the 792-residue chain is DNA ligase (792 aa).

NAD(+)-binding positions include 42–46, 91–92, and Glu124; these read DAEYD and SL. Catalysis depends on Lys126, which acts as the N6-AMP-lysine intermediate. The NAD(+) site is built by Arg147, Glu189, Lys306, and Lys330. Cys424, Cys426, Cys448, and Cys454 together coordinate Zn(2+). The 79-residue stretch at 714–792 folds into the BRCT domain; it reads KTDTAVAGKT…EDEWLAMVGG (79 aa).

The protein belongs to the NAD-dependent DNA ligase family. LigA subfamily. Mg(2+) serves as cofactor. Mn(2+) is required as a cofactor.

The enzyme catalyses NAD(+) + (deoxyribonucleotide)n-3'-hydroxyl + 5'-phospho-(deoxyribonucleotide)m = (deoxyribonucleotide)n+m + AMP + beta-nicotinamide D-nucleotide.. DNA ligase that catalyzes the formation of phosphodiester linkages between 5'-phosphoryl and 3'-hydroxyl groups in double-stranded DNA using NAD as a coenzyme and as the energy source for the reaction. It is essential for DNA replication and repair of damaged DNA. The chain is DNA ligase from Caulobacter sp. (strain K31).